Consider the following 417-residue polypeptide: Actin-related protein 10 (417 aa).

It belongs to the actin family. In terms of assembly, subunit of dynactin, a multiprotein complex part of a tripartite complex with dynein and a adapter, such as BICDL1, BICD2 or HOOK3. The dynactin complex is built around ACTR1A/ACTB filament and consists of an actin-related filament composed of a shoulder domain, a pointed end and a barbed end. Its length is defined by its flexible shoulder domain. The soulder is composed of 2 DCTN1 subunits, 4 DCTN2 and 2 DCTN3. The 4 DCNT2 (via N-terminus) bind the ACTR1A filament and act as molecular rulers to determine the length. The pointed end is important for binding dynein-dynactin cargo adapters. Consists of 4 subunits: ACTR10, DCNT4, DCTN5 and DCTN6. The barbed end is composed of a CAPZA1:CAPZB heterodimers, which binds ACTR1A/ACTB filament and dynactin and stabilizes dynactin.

It localises to the cytoplasm. It is found in the cytoskeleton. Functionally, part of the dynactin complex that activates the molecular motor dynein for ultra-processive transport along microtubules. The protein is Actin-related protein 10 (ACTR10) of Homo sapiens (Human).